A 189-amino-acid polypeptide reads, in one-letter code: Thymidine kinase (189 aa).

Residues 9–16 and 85–88 contribute to the ATP site; these read GTMNSGKT and DESQ. Glu-86 serves as the catalytic Proton acceptor. Zn(2+) is bound by residues Cys-143, Cys-146, Cys-180, and His-183.

It belongs to the thymidine kinase family. In terms of assembly, homotetramer.

The protein localises to the cytoplasm. The catalysed reaction is thymidine + ATP = dTMP + ADP + H(+). The protein is Thymidine kinase of Streptococcus pyogenes serotype M18 (strain MGAS8232).